The chain runs to 182 residues: Mid1-interacting protein 1 (182 aa).

Position 1 is an N-acetylmethionine (M1). Positions 55-75 (VGGSGGCLEERTTPAPSPGSA) are disordered. 3 positions are modified to phosphoserine: S71, S74, and S78.

The protein belongs to the SPOT14 family. Homodimer in the absence of THRSP. Heterodimer with THRSP. The homodimer interacts with ACACA and ACACB. Promotes polymerization of Acetyl-CoA carboxylase to form complexes that contain MID1IP1 and ACACA and/or ACACB. Interaction with THRSP interferes with ACACA binding. During embryonic development, expressed mainly in the neuroepithelial midline, urogenital apparatus and digits. Detected in adult white fat, liver, heart, brain and kidney. Expressed at very low levels in lactating mammary gland.

It localises to the nucleus. It is found in the cytoplasm. The protein resides in the cytoskeleton. Plays a role in the regulation of lipogenesis in liver. Up-regulates ACACA enzyme activity. Required for efficient lipid biosynthesis, including triacylglycerol, diacylglycerol and phospholipid. Involved in stabilization of microtubules. This chain is Mid1-interacting protein 1 (Mid1ip1), found in Mus musculus (Mouse).